The sequence spans 395 residues: Flap endonuclease 1 (395 aa).

An N-domain region spans residues 1–108 (MGILGLSKLL…DELEMRRQKA (108 aa)). Residue Asp-34 coordinates Mg(2+). DNA is bound at residue Arg-74. Asp-90, Glu-162, Glu-164, Asp-183, and Asp-185 together coordinate Mg(2+). Residues 126-257 (MMEKMSKRTV…QKAWEGIQRY (132 aa)) form an I-domain region. DNA is bound at residue Glu-162. Positions 235 and 237 each coordinate DNA. Asp-237 is a binding site for Mg(2+). The interval 340 to 348 (TQGRLDSFF) is interaction with PCNA.

The protein belongs to the XPG/RAD2 endonuclease family. FEN1 subfamily. Interacts with PCNA. Three molecules of FEN1 bind to one PCNA trimer with each molecule binding to one PCNA monomer. PCNA stimulates the nuclease activity without altering cleavage specificity. It depends on Mg(2+) as a cofactor. Phosphorylated. Phosphorylation upon DNA damage induces relocalization to the nuclear plasma.

It localises to the nucleus. It is found in the nucleolus. The protein localises to the nucleoplasm. The protein resides in the mitochondrion. In terms of biological role, structure-specific nuclease with 5'-flap endonuclease and 5'-3' exonuclease activities involved in DNA replication and repair. During DNA replication, cleaves the 5'-overhanging flap structure that is generated by displacement synthesis when DNA polymerase encounters the 5'-end of a downstream Okazaki fragment. It enters the flap from the 5'-end and then tracks to cleave the flap base, leaving a nick for ligation. Also involved in the long patch base excision repair (LP-BER) pathway, by cleaving within the apurinic/apyrimidinic (AP) site-terminated flap. Acts as a genome stabilization factor that prevents flaps from equilibrating into structures that lead to duplications and deletions. Also possesses 5'-3' exonuclease activity on nicked or gapped double-stranded DNA, and exhibits RNase H activity. Also involved in replication and repair of rDNA and in repairing mitochondrial DNA. The protein is Flap endonuclease 1 of Leishmania infantum.